Reading from the N-terminus, the 637-residue chain is Neurexin-3-beta (637 aa).

The N-terminal stretch at 1 to 35 (MHLRIHARRSPPRRPAWTLGIWFLFWGCIVSSVWS) is a signal peptide. Residues 36 to 562 (SSNVASSSST…EVIRESSSTT (527 aa)) are Extracellular-facing. Over residues 43-52 (SSTSSSPGSH) the composition is skewed to low complexity. Positions 43–65 (SSTSSSPGSHSQHEHHFHGSKHH) are disordered. Residues 55-65 (HEHHFHGSKHH) show a composition bias toward basic residues. One can recognise a Laminin G-like domain in the interval 85–255 (ATYIFGKSGG…NPNIKINGSV (171 aa)). Residues Asp137 and Ile154 each contribute to the Ca(2+) site. A glycan (N-linked (GlcNAc...) asparagine) is linked at Asn184. 2 residues coordinate Ca(2+): Ile206 and Asn208. N-linked (GlcNAc...) asparagine glycans are attached at residues Asn252 and Asn296. Residues 289–310 (ATTTTRKNRSTASIQPTSDDLV) are disordered. Positions 298–310 (STASIQPTSDDLV) are enriched in polar residues. O-linked (Xyl...) (heparan sulfate) serine glycosylation is present at Ser312. Residues 563–583 (GMVVGIVAAAALCILILLYAM) traverse the membrane as a helical segment. Topologically, residues 584 to 637 (YKYRNRDEGSYQVDETRNYISNSAQSNGTLMKEKQQSSKSGHKKQKNKDREYYV) are cytoplasmic. Positions 605–637 (NSAQSNGTLMKEKQQSSKSGHKKQKNKDREYYV) are disordered.

Belongs to the neurexin family. In terms of assembly, weakly interacts with CBLN1 and CBLN2. Very weak binding, if any, to CBLN4. Specific isoforms bind neuroligins NLGN1, NLGN2 and NLGN3. Interacts with CLSTN3. Post-translationally, processed by alpha-secretase leading to the formation of an extracellular soluble protein as well as a C-terminal membrane-embedded fragment (CTF). Proteolysis of these CTFs by gamma-secretase releases intracellular domains (ICDs) and extracellular peptides. O-glycosylated; contains heparan sulfate. Heparan sulfate attachment is required for synapse development by mediating interactions with neuroligins. As to expression, expressed in the blood vessel walls (at protein level).

It localises to the presynaptic cell membrane. Its function is as follows. Neuronal cell surface protein that may be involved in cell recognition and cell adhesion. May mediate intracellular signaling. Functions as part of a trans-synaptic complex by binding to cerebellins and postsynaptic GRID1. This interaction helps regulate the activity of NMDA and AMPA receptors at hippocampal synapses without affecting synapse formation. NRXN3B-CBLN2-GRID1 complex transduce presynaptic signals into postsynaptic AMPAR response. This Homo sapiens (Human) protein is Neurexin-3-beta.